The primary structure comprises 400 residues: Cytohesin-3 (400 aa).

A coiled-coil region spans residues 14-61; that stretch reads EDLSLEEREELLDIRRRKKELIDDIERLKYEIAEVMTEIDNLTSVEES. Residues 77–206 form the SEC7 domain; it reads FNMDPKKGIQ…IIMLNTSLHN (130 aa). The PH domain maps to 264–381; sequence NPDREGWLLK…WMKSIKASIS (118 aa). A 1,2-diacyl-sn-glycero-3-phospho-(1D-myo-inositol-3,4,5-trisphosphate)-binding positions include 273-281, Arg-285, Tyr-296, Arg-306, and Asn-355; that span reads KLGGGRVKT. Residues 392-400 form a C-terminal autoinhibitory region region; the sequence is RKRRIANKK.

Interacts with TAMALIN. Interacts with ARF6. Interacts with FRMD4A. Interacts with FRMD4B. In terms of tissue distribution, almost absent from liver, thymus and peripheral blood lymphocytes.

Its subcellular location is the cytoplasm. It localises to the cytosol. The protein localises to the cell membrane. It is found in the cell junction. The protein resides in the adherens junction. Its subcellular location is the tight junction. Functionally, promotes guanine-nucleotide exchange on ARF1 and ARF6. Promotes the activation of ARF factors through replacement of GDP with GTP. Plays a role in the epithelial polarization. The chain is Cytohesin-3 from Homo sapiens (Human).